Here is a 5087-residue protein sequence, read N- to C-terminus: Nonribosomal peptide synthetase sidC (5087 aa).

Positions 165–563 (HEMVRHTGNE…NGELQCMGRI (399 aa)) are adenylation 1. The Carrier 1 domain occupies 671–744 (EPAGDIEQKI…KMAALVLKSQ (74 aa)). An O-(pantetheine 4'-phosphoryl)serine modification is found at Ser705. The segment at 782–1112 (DIIPCSPIQT…LFDTLFVWQD (331 aa)) is condensation 1. Positions 1217-1611 (ELAKTDSERI…GRRDDLVKIR (395 aa)) are adenylation 2. The region spanning 1740 to 1817 (ENLTDNEAKV…RLTRKISQSI (78 aa)) is the Carrier 2 domain. An O-(pantetheine 4'-phosphoryl)serine modification is found at Ser1777. The tract at residues 1855-2272 (KILPCTSLQE…RVMDFSLVES (418 aa)) is condensation 2. Residues 2302-2378 (EEWSAESLEI…EIASVLQGSK (77 aa)) form the Carrier 3 domain. O-(pantetheine 4'-phosphoryl)serine is present on Ser2339. Positions 2419 to 2831 (PCTTPQAGML…STSSSLDTAS (413 aa)) are condensation 3. The interval 2860-3258 (ATRHPSRVAL…GRIDDQVKLR (399 aa)) is adenylation 3. The Carrier 4 domain occupies 3387–3464 (TEDTDTIRKI…LLAKAVESPD (78 aa)). Position 3424 is an O-(pantetheine 4'-phosphoryl)serine (Ser3424). The segment at 3506–3910 (ITPCTSLQDG…RSLVEEPFSN (405 aa)) is condensation 4. The Carrier 5 domain maps to 3943–4019 (FQWSQAASLL…TMMAEVTVNG (77 aa)). Ser3980 is subject to O-(pantetheine 4'-phosphoryl)serine. Residues 4051 to 4416 (EHIYPATPLQ…EYSICVELEA (366 aa)) form a condensation 5 region. Residues 4496–4569 (SLLEERIRDT…KMAEIVNSAR (74 aa)) form the Carrier 6 domain. O-(pantetheine 4'-phosphoryl)serine is present on Ser4530. The condensation 6 stretch occupies residues 4610 to 4913 (FLPATAGQVY…IQSDLHEIGS (304 aa)). Positions 5013 to 5048 (DVYKVSPPGSQLSQDSPEKQEANNKPSPQPSVDIEA) are disordered.

It belongs to the NRP synthetase family.

Its pathway is siderophore biosynthesis. Nonribosomal peptide synthetase; part of the siderophore biosynthetic pathway. Arthroderma benhamiae produces 2 types of extracellular siderophores, ferrichrome C and ferricrocin. The biosynthesis of these siderophores depends on the hydroxylation of ornithine to N(5)-hydroxyornithine, catalyzed by the monooxygenase sidA. The structure of ferricrocin differs from ferrichrome C only by a serine for alanine substitution and the assembly of both siderophores is suggested to be performed by the nonribosomal peptide synthase (NRPS) sidC. In Arthroderma benhamiae (strain ATCC MYA-4681 / CBS 112371) (Trichophyton mentagrophytes), this protein is Nonribosomal peptide synthetase sidC.